Here is a 286-residue protein sequence, read N- to C-terminus: Bifunctional protein FolD (286 aa).

Residues 168-170 (GRG), T195, and V236 each bind NADP(+).

This sequence belongs to the tetrahydrofolate dehydrogenase/cyclohydrolase family. In terms of assembly, homodimer.

It catalyses the reaction (6R)-5,10-methylene-5,6,7,8-tetrahydrofolate + NADP(+) = (6R)-5,10-methenyltetrahydrofolate + NADPH. The enzyme catalyses (6R)-5,10-methenyltetrahydrofolate + H2O = (6R)-10-formyltetrahydrofolate + H(+). It participates in one-carbon metabolism; tetrahydrofolate interconversion. Its function is as follows. Catalyzes the oxidation of 5,10-methylenetetrahydrofolate to 5,10-methenyltetrahydrofolate and then the hydrolysis of 5,10-methenyltetrahydrofolate to 10-formyltetrahydrofolate. The protein is Bifunctional protein FolD of Mycolicibacterium fortuitum (Mycobacterium fortuitum).